The following is a 160-amino-acid chain: SsrA-binding protein (160 aa).

Positions 130-160 (LAKGKKKHDKRADQKEQDWQRQKQRLMKHKV) are disordered. Basic and acidic residues predominate over residues 139 to 150 (KRADQKEQDWQR). Over residues 151 to 160 (QKQRLMKHKV) the composition is skewed to basic residues.

The protein belongs to the SmpB family.

Its subcellular location is the cytoplasm. Its function is as follows. Required for rescue of stalled ribosomes mediated by trans-translation. Binds to transfer-messenger RNA (tmRNA), required for stable association of tmRNA with ribosomes. tmRNA and SmpB together mimic tRNA shape, replacing the anticodon stem-loop with SmpB. tmRNA is encoded by the ssrA gene; the 2 termini fold to resemble tRNA(Ala) and it encodes a 'tag peptide', a short internal open reading frame. During trans-translation Ala-aminoacylated tmRNA acts like a tRNA, entering the A-site of stalled ribosomes, displacing the stalled mRNA. The ribosome then switches to translate the ORF on the tmRNA; the nascent peptide is terminated with the 'tag peptide' encoded by the tmRNA and targeted for degradation. The ribosome is freed to recommence translation, which seems to be the essential function of trans-translation. The polypeptide is SsrA-binding protein (Alkalilimnicola ehrlichii (strain ATCC BAA-1101 / DSM 17681 / MLHE-1)).